The following is a 234-amino-acid chain: Phosphoglycolate phosphatase (234 aa).

Asp-8 serves as the catalytic Nucleophile. Residues Asp-8 and Asp-10 each coordinate Mg(2+). Lys-155 lines the substrate pocket. Positions 178 and 182 each coordinate Mg(2+).

This sequence belongs to the archaeal SPP-like hydrolase family. The cofactor is Mg(2+).

It catalyses the reaction 2-phosphoglycolate + H2O = glycolate + phosphate. In terms of biological role, catalyzes the dephosphorylation of 2-phosphoglycolate. This Thermococcus sibiricus (strain DSM 12597 / MM 739) protein is Phosphoglycolate phosphatase.